Reading from the N-terminus, the 305-residue chain is MPIKINKTVIFLMGPTTSGKTDLAIKLSQQFKTRLISVDSALIYKGMDIGTAKPDKATLKKYPHHLIDICNPEDSYSAFNFARNANAQIKTAFANNELPILVGGTSFYFHALEYGLSKLPESTPESKEKFNQLLKSKGTIKLHRDLKRIDLQAANRIHPNDAQRITRALEVFDLSGKTLSKLQGNKKPIINHPIKKIILMPERSELHQRIEERFLSMMEHGFLDEVKHLKQNPNLHENLPAIRCVGYRQAWQYLNGKIDKAEMIEKAIIATRKLCKRQNTWLKSEKYVFILKSPSPVKVVTFINS.

14–21 (GPTTSGKT) contacts ATP. 16–21 (TTSGKT) provides a ligand contact to substrate. 3 interaction with substrate tRNA regions span residues 39-42 (DSAL), 163-167 (QRITR), and 243-248 (RCVGYR).

It belongs to the IPP transferase family. Monomer. Mg(2+) is required as a cofactor.

The enzyme catalyses adenosine(37) in tRNA + dimethylallyl diphosphate = N(6)-dimethylallyladenosine(37) in tRNA + diphosphate. Functionally, catalyzes the transfer of a dimethylallyl group onto the adenine at position 37 in tRNAs that read codons beginning with uridine, leading to the formation of N6-(dimethylallyl)adenosine (i(6)A). This is tRNA dimethylallyltransferase from Ruthia magnifica subsp. Calyptogena magnifica.